The primary structure comprises 304 residues: D-alanine--D-alanine ligase (304 aa).

Residues Lys99–Glu293 enclose the ATP-grasp domain. Residue Leu126 to Thr181 coordinates ATP. Positions 248, 260, and 262 each coordinate Mg(2+).

It belongs to the D-alanine--D-alanine ligase family. Requires Mg(2+) as cofactor. Mn(2+) serves as cofactor.

It is found in the cytoplasm. The enzyme catalyses 2 D-alanine + ATP = D-alanyl-D-alanine + ADP + phosphate + H(+). The protein operates within cell wall biogenesis; peptidoglycan biosynthesis. Functionally, cell wall formation. The sequence is that of D-alanine--D-alanine ligase from Bacillus anthracis (strain A0248).